Here is a 442-residue protein sequence, read N- to C-terminus: Syndecan-3 (442 aa).

Disordered regions lie at residues M1–A25 and R47–S80. Residues M1 to G44 form the signal peptide. At A45 to V387 the chain is on the extracellular side. A compositionally biased stretch (basic and acidic residues) spans W48–D58. Residues G61–D75 show a composition bias toward acidic residues. S78, S80, S82, and S89 each carry an O-linked (Xyl...) (glycosaminoglycan) serine glycan. Residue T107 is glycosylated (O-linked (GalNAc) threonine; by GALNT13). Disordered regions lie at residues E152–A199, A253–P293, and E305–P327. Composition is skewed to low complexity over residues A157–A199 and T276–T287. An O-linked (GalNAc) serine; by GALNT13 glycan is attached at S161. 4 O-linked (GalNAc) threonine; by GALNT13 glycosylation sites follow: T162, T163, T170, and T172. O-linked (Xyl...) (glycosaminoglycan) serine glycosylation is found at S315 and S367. The helical transmembrane segment at A388–I408 threads the bilayer. Y409, Y419, Y431, and Y441 each carry phosphotyrosine. At Y409 to A442 the chain is on the cytoplasmic side. Residues Y419–A442 form a disordered region. Over residues K433 to A442 the composition is skewed to basic and acidic residues.

Belongs to the syndecan proteoglycan family. As to quaternary structure, interacts with TIAM1. Interacts with PTN (via heparan sulfate chains); this interaction mediates the neurite outgrowth-promoting signal from PTN to the cytoskeleton of growing neurites; this interaction mediates osteoblast recruitment. Interacts with MDK; this interaction induces SDC3 clustering; this interaction induces neuronal cell adhesion and neurite outgrowth. In terms of processing, O-glycosylated within the Thr/Ser-rich region which could interact with lectin domains on other molecules.

Its subcellular location is the cell membrane. Its function is as follows. Cell surface proteoglycan that may bear heparan sulfate. May have a role in the organization of cell shape by affecting the actin cytoskeleton, possibly by transferring signals from the cell surface in a sugar-dependent mechanism. The protein is Syndecan-3 (Sdc3) of Mus musculus (Mouse).